Consider the following 154-residue polypeptide: Myoglobin (154 aa).

Residues 2–148 (GLSDQEWQQV…FRNDMASKYK (147 aa)) enclose the Globin domain. Residue His65 coordinates nitrite. Residue His65 participates in O2 binding. His94 contacts heme b.

Belongs to the globin family. As to quaternary structure, monomeric.

Its subcellular location is the cytoplasm. It localises to the sarcoplasm. It carries out the reaction Fe(III)-heme b-[protein] + nitric oxide + H2O = Fe(II)-heme b-[protein] + nitrite + 2 H(+). The catalysed reaction is H2O2 + AH2 = A + 2 H2O. Its function is as follows. Monomeric heme protein which primary function is to store oxygen and facilitate its diffusion within muscle tissues. Reversibly binds oxygen through a pentacoordinated heme iron and enables its timely and efficient release as needed during periods of heightened demand. Depending on the oxidative conditions of tissues and cells, and in addition to its ability to bind oxygen, it also has a nitrite reductase activity whereby it regulates the production of bioactive nitric oxide. Under stress conditions, like hypoxia and anoxia, it also protects cells against reactive oxygen species thanks to its pseudoperoxidase activity. This is Myoglobin (MB) from Aethia pygmaea (Whiskered auklet).